Reading from the N-terminus, the 160-residue chain is Putative 4-hydroxy-4-methyl-2-oxoglutarate aldolase (160 aa).

Substrate is bound by residues 78–81 (GDVI) and Arg100. Asp101 provides a ligand contact to a divalent metal cation.

It belongs to the class II aldolase/RraA-like family. In terms of assembly, homotrimer. A divalent metal cation serves as cofactor.

It catalyses the reaction 4-hydroxy-4-methyl-2-oxoglutarate = 2 pyruvate. The catalysed reaction is oxaloacetate + H(+) = pyruvate + CO2. Catalyzes the aldol cleavage of 4-hydroxy-4-methyl-2-oxoglutarate (HMG) into 2 molecules of pyruvate. Also contains a secondary oxaloacetate (OAA) decarboxylase activity due to the common pyruvate enolate transition state formed following C-C bond cleavage in the retro-aldol and decarboxylation reactions. This Mycolicibacterium paratuberculosis (strain ATCC BAA-968 / K-10) (Mycobacterium paratuberculosis) protein is Putative 4-hydroxy-4-methyl-2-oxoglutarate aldolase.